We begin with the raw amino-acid sequence, 204 residues long: Rho GDP-dissociation inhibitor 1 (204 aa).

Residues 1–36 are disordered; sequence MAEQEPTAEQLAQIAAENEEDEHSVNYKPPAQKSIQ. Position 2 is an N-acetylalanine (Ala-2). At Ser-34 the chain carries Phosphoserine. Lys-43 carries the N6-acetyllysine modification. Position 47 is a phosphoserine (Ser-47). Positions 66–83 are hydrophobic; the sequence is NVPNVVVTRLTLVCSTAP. The residue at position 101 (Ser-101) is a Phosphoserine; by PKA. At Lys-105 the chain carries N6-acetyllysine. The residue at position 115 (Ser-115) is a Phosphoserine; by PKC. Residue Lys-127 is modified to N6-acetyllysine. Residues Lys-138 and Lys-141 each participate in a glycyl lysine isopeptide (Lys-Gly) (interchain with G-Cter in SUMO1); alternate cross-link. Residues Lys-138 and Lys-141 each participate in a glycyl lysine isopeptide (Lys-Gly) (interchain with G-Cter in SUMO2); alternate cross-link. An N6-acetyllysine; alternate modification is found at Lys-141. Residue Lys-141 is modified to N6-succinyllysine; alternate. Lys-178 carries the N6-acetyllysine modification.

It belongs to the Rho GDI family. In terms of assembly, monomer. Interacts with FER. Interacts with PLXNB3. Forms a heterodimer with RAC1. Interacts with RHOA, the affinity is increased by three orders of magnitude when RHOA is prenylated. Interacts with PSMD10; the interaction increases ARHGDIA association with RHOA, leading to ARHGDIA-mediated inactivation of RHOA and ROCK and prolonged AKT activation. Interacts with KANK2; the interaction is direct and may regulate the interaction of ARHGDIA with RHOA, RAC1 and CDC42. Interacts with RHOC. Interacts with CDC42. Interacts with NGFR (via death domain); NGFR binding decreases the affinity for RHOA. As to expression, brain, lung, thymus, spleen, small intestine, and kidney, and weakly in heart and liver.

It localises to the cytoplasm. Its function is as follows. Controls Rho proteins homeostasis. Regulates the GDP/GTP exchange reaction of the Rho proteins by inhibiting the dissociation of GDP from them, and the subsequent binding of GTP to them. Retains Rho proteins such as CDC42, RAC1 and RHOA in an inactive cytosolic pool, regulating their stability and protecting them from degradation. Actively involved in the recycling and distribution of activated Rho GTPases in the cell, mediates extraction from membranes of both inactive and activated molecules due its exceptionally high affinity for prenylated forms. Through the modulation of Rho proteins, may play a role in cell motility regulation. In glioma cells, inhibits cell migration and invasion by mediating the signals of SEMA5A and PLXNB3 that lead to inactivation of RAC1. This Bos taurus (Bovine) protein is Rho GDP-dissociation inhibitor 1 (ARHGDIA).